A 345-amino-acid chain; its full sequence is Anthranilate phosphoribosyltransferase (345 aa).

Residues Gly-86, 89–90, Thr-94, 96–99, 114–122, and Ser-126 each bind 5-phospho-alpha-D-ribose 1-diphosphate; these read GD, NIST, and KHGGRGVSS. Position 86 (Gly-86) interacts with anthranilate. Ser-98 contacts Mg(2+). Arg-172 is a binding site for anthranilate. Mg(2+) is bound by residues Asp-231 and Glu-232.

This sequence belongs to the anthranilate phosphoribosyltransferase family. As to quaternary structure, homodimer. Requires Mg(2+) as cofactor.

The enzyme catalyses N-(5-phospho-beta-D-ribosyl)anthranilate + diphosphate = 5-phospho-alpha-D-ribose 1-diphosphate + anthranilate. The protein operates within amino-acid biosynthesis; L-tryptophan biosynthesis; L-tryptophan from chorismate: step 2/5. Functionally, catalyzes the transfer of the phosphoribosyl group of 5-phosphorylribose-1-pyrophosphate (PRPP) to anthranilate to yield N-(5'-phosphoribosyl)-anthranilate (PRA). The sequence is that of Anthranilate phosphoribosyltransferase from Ralstonia pickettii (strain 12J).